The chain runs to 223 residues: Endonuclease NucS (223 aa).

The protein belongs to the NucS endonuclease family.

It localises to the cytoplasm. Its function is as follows. Cleaves both 3' and 5' ssDNA extremities of branched DNA structures. This Mycobacterium marinum (strain ATCC BAA-535 / M) protein is Endonuclease NucS.